A 965-amino-acid chain; its full sequence is Probable ion channel POLLUX (965 aa).

Over residues 1 to 11 the composition is skewed to low complexity; it reads MAESDGGEASP. Disordered regions lie at residues 1-76 and 108-158; these read MAES…APRG and GPHA…KSLA. Residues 32-42 show a composition bias toward polar residues; that stretch reads LTKSRTISGSA. Low complexity-rich tracts occupy residues 52-66 and 118-149; these read SNSS…SSTA and RSQQ…ASVS. Helical transmembrane passes span 187–207, 251–271, 317–337, and 369–389; these read LSPY…LAIW, ADWN…VFLV, LALL…LYVV, and IVSV…LGLV. RCK N-terminal domains follow at residues 410–551 and 670–818; these read VNHI…ETVV and PEKI…DKSI.

This sequence belongs to the castor/pollux (TC 1.A.1.23) family. Expressed in roots, leaves, stems and panicles.

It is found in the nucleus membrane. Its function is as follows. Required for mycorrhizal symbiosis. The polypeptide is Probable ion channel POLLUX (Oryza sativa subsp. japonica (Rice)).